The chain runs to 428 residues: Delta-aminolevulinic acid dehydratase, chloroplastic (428 aa).

The Schiff-base intermediate with substrate role is filled by K294. 5-aminolevulinate is bound by residues R304 and K316. E332 lines the Mg(2+) pocket. The Schiff-base intermediate with substrate role is filled by K347. Positions 373 and 412 each coordinate 5-aminolevulinate.

Belongs to the ALAD family. Homooctamer. Mg(2+) is required as a cofactor.

The protein resides in the plastid. It localises to the chloroplast. It catalyses the reaction 2 5-aminolevulinate = porphobilinogen + 2 H2O + H(+). The protein operates within porphyrin-containing compound metabolism; protoporphyrin-IX biosynthesis; coproporphyrinogen-III from 5-aminolevulinate: step 1/4. Its function is as follows. Catalyzes an early step in the biosynthesis of tetrapyrroles. Binds two molecules of 5-aminolevulinate per subunit, each at a distinct site, and catalyzes their condensation to form porphobilinogen. This chain is Delta-aminolevulinic acid dehydratase, chloroplastic (HEMB), found in Hordeum vulgare (Barley).